A 206-amino-acid chain; its full sequence is Ion-translocating oxidoreductase complex subunit G (206 aa).

Residues 9 to 29 (GITLALFAAGSTGLTAAINQM) form a helical membrane-spanning segment. Position 174 is an FMN phosphoryl threonine (threonine 174).

This sequence belongs to the RnfG family. In terms of assembly, the complex is composed of six subunits: RsxA, RsxB, RsxC, RsxD, RsxE and RsxG. The cofactor is FMN.

The protein localises to the cell inner membrane. Its function is as follows. Part of a membrane-bound complex that couples electron transfer with translocation of ions across the membrane. Required to maintain the reduced state of SoxR. Probably transfers electron from NAD(P)H to SoxR. The polypeptide is Ion-translocating oxidoreductase complex subunit G (Escherichia coli (strain K12)).